Here is a 725-residue protein sequence, read N- to C-terminus: Beta-adducin (725 aa).

Residues 1–22 (MSEDTVPEAASPPPSQGQHYFD) form a disordered region. Phosphoserine occurs at positions 11 and 25. At Thr-55 the chain carries Phosphothreonine. 2 positions are modified to phosphoserine: Ser-60 and Ser-344. The interval 425 to 444 (KQQKEKTRWLNTPNTYLRVN) is interaction with calmodulin. A disordered region spans residues 525–725 (AEKSRSPSTE…KSKKKEKVES (201 aa)). Residues Ser-530 and Ser-532 each carry the phosphoserine modification. Phosphothreonine is present on Thr-533. A Phosphoserine modification is found at Ser-535. Phosphothreonine is present on Thr-561. The span at 566-588 (EEYKKEVERKKLEQEQEGEKDAA) shows a compositional bias: basic and acidic residues. Residues Ser-594, Ser-598, Ser-602, and Ser-606 each carry the phosphoserine modification. Polar residues predominate over residues 596–621 (VKSTPASPVQSPTRAGTKSPAVSPSK). The residue at position 612 (Thr-612) is a Phosphothreonine. Phosphoserine occurs at positions 614, 618, and 620. 2 stretches are compositionally biased toward basic and acidic residues: residues 622 to 631 (ASEDAKKTEV) and 639 to 654 (EPEK…KEEE). A Phosphothreonine modification is found at Thr-674. Ser-678, Ser-685, Ser-688, Ser-692, Ser-696, Ser-698, Ser-700, Ser-702, and Ser-712 each carry phosphoserine. A compositionally biased stretch (low complexity) spans 687–700 (TSGPLSPEGSPSKS). Residues 701–725 (PSKKKKKFRTPSFLKKSKKKEKVES) show a composition bias toward basic residues. The segment at 703 to 720 (KKKKKFRTPSFLKKSKKK) is interaction with calmodulin.

This sequence belongs to the aldolase class II family. Adducin subfamily. As to quaternary structure, heterodimer of an alpha and a beta subunit. Found in a complex with ADD2, DMTN and SLC2A1. Interacts with SLC2A1. In terms of tissue distribution, found in liver, kidney, spleen, heart and brain.

Its subcellular location is the cytoplasm. It is found in the cytoskeleton. The protein localises to the cell membrane. Functionally, membrane-cytoskeleton-associated protein that promotes the assembly of the spectrin-actin network. Binds to the erythrocyte membrane receptor SLC2A1/GLUT1 and may therefore provide a link between the spectrin cytoskeleton to the plasma membrane. Binds to calmodulin. Calmodulin binds preferentially to the beta subunit. This chain is Beta-adducin (Add2), found in Rattus norvegicus (Rat).